Reading from the N-terminus, the 303-residue chain is tRNA dimethylallyltransferase (303 aa).

ATP is bound at residue glycine 9–threonine 16. Position 11 to 16 (threonine 11 to threonine 16) interacts with substrate. An interaction with substrate tRNA region spans residues aspartate 34–glutamine 37.

Belongs to the IPP transferase family. As to quaternary structure, monomer. It depends on Mg(2+) as a cofactor.

It catalyses the reaction adenosine(37) in tRNA + dimethylallyl diphosphate = N(6)-dimethylallyladenosine(37) in tRNA + diphosphate. Its function is as follows. Catalyzes the transfer of a dimethylallyl group onto the adenine at position 37 in tRNAs that read codons beginning with uridine, leading to the formation of N6-(dimethylallyl)adenosine (i(6)A). The chain is tRNA dimethylallyltransferase from Petrotoga mobilis (strain DSM 10674 / SJ95).